The primary structure comprises 1026 residues: Glutactin (1026 aa).

The first 17 residues, 1-17, serve as a signal peptide directing secretion; the sequence is MKPLLLVLALCGAQVHA. Sulfotyrosine occurs at positions 26 and 29. N-linked (GlcNAc...) asparagine glycosylation is present at asparagine 115. Cysteine 123 and cysteine 145 are oxidised to a cystine. Residue tyrosine 182 is modified to Sulfotyrosine. A disulfide bond links cysteine 298 and cysteine 316. N-linked (GlcNAc...) asparagine glycosylation is found at asparagine 368 and asparagine 402. Tyrosine 559 bears the Sulfotyrosine mark. The interval 601–641 is disordered; sequence PITTTTTTTTTTTTTSRPYAYNPYANWQNRPSQQHPNWHPA. Residues 603–615 are compositionally biased toward low complexity; sequence TTTTTTTTTTTTT. Residues 625–636 are compositionally biased toward polar residues; it reads ANWQNRPSQQHP. Residue tyrosine 645 is modified to Sulfotyrosine. Disordered regions lie at residues 659–695 and 723–1026; these read EREQRRREQQLRDQQRYPQQEPREQQDERIRQQREQE and EREQ…NSRN. The segment covering 723-752 has biased composition (basic and acidic residues); it reads EREQYEREQQEREQREREELERQQREREQQ. Tyrosine 727 bears the Sulfotyrosine mark. An N-linked (GlcNAc...) asparagine glycan is attached at asparagine 810. A compositionally biased stretch (basic and acidic residues) spans 811 to 854; sequence FSEEDREQQQQEQLRREQQEQQEREYQLQLEREQQEREQQERGQ. Residues tyrosine 836, tyrosine 862, tyrosine 865, tyrosine 868, tyrosine 922, and tyrosine 928 each carry the sulfotyrosine modification. The segment covering 855–866 has biased composition (low complexity); it reads QEPGPEEYPSYE. A compositionally biased stretch (basic and acidic residues) spans 867 to 893; that stretch reads EYSRALQEKNAERDRIYAEEQERERQQ. The segment covering 923-944 has biased composition (basic and acidic residues); sequence DGDRSYAEEQEREQQRRDQVEQ. Over residues 945-969 the composition is skewed to acidic residues; it reads EREEQPDEDQGEEYERSPDEEEAAE. Sulfotyrosine is present on residues tyrosine 981, tyrosine 984, and tyrosine 1006. Basic and acidic residues predominate over residues 1002 to 1026; sequence EEERYRAQQEEEDRIQAERERNSRN.

This sequence in the N-terminal section; belongs to the type-B carboxylesterase/lipase family. In terms of processing, extensively O-glycosylated and also N-glycosylated. Post-translationally, about four tyrosines are sulfated.

It is found in the secreted. Its subcellular location is the extracellular space. The protein resides in the extracellular matrix. The protein localises to the basement membrane. Functionally, not known. Binds calcium ions. The protein is Glutactin (Glt) of Drosophila melanogaster (Fruit fly).